Consider the following 90-residue polypeptide: Large ribosomal subunit protein bL27 (90 aa).

The interval 1 to 24 (MAHKKGTGSTRNGRDSNSKRLGVK) is disordered.

Belongs to the bacterial ribosomal protein bL27 family.

This chain is Large ribosomal subunit protein bL27, found in Prochlorococcus marinus (strain NATL1A).